The primary structure comprises 99 residues: Small ribosomal subunit protein uS14m (99 aa).

This sequence belongs to the universal ribosomal protein uS14 family.

It localises to the mitochondrion. This chain is Small ribosomal subunit protein uS14m (RPS14), found in Marchantia polymorpha (Common liverwort).